Here is a 347-residue protein sequence, read N- to C-terminus: Ryncolin-2 (347 aa).

The signal sequence occupies residues 1–19; the sequence is MKPWAAFHLIFLVASSLEG. Residues 49–115 form a disordered region; it reads LQSQPGIPGI…DKGDKGDKGD (67 aa). The 58-residue stretch at 57-114 folds into the Collagen-like domain; sequence GIPGVPGINGSEGLKGDPGPQGLPGETGFDGIPGVAGPKGDKGDQGDKGDKGDKGDKG. The segment covering 95–115 has biased composition (basic and acidic residues); sequence KGDKGDQGDKGDKGDKGDKGD. The Fibrinogen C-terminal domain occupies 121–341; sequence DCPPTDVEVR…YADMKIRPQQ (221 aa). Cystine bridges form between C132/C160 and C284/C297.

Belongs to the ficolin lectin family. Veficolin subfamily. In terms of processing, hydroxylated, possibly at Pro-74 and Pro-94. In terms of tissue distribution, expressed by the venom duct.

The protein resides in the secreted. Initiates complement activation and/or interferes in platelet aggregation and/or blood coagulation. The sequence is that of Ryncolin-2 from Cerberus rynchops (Dog-faced water snake).